Consider the following 82-residue polypeptide: Putative membrane protein insertion efficiency factor (82 aa).

The segment at 63 to 82 is disordered; sequence GGFDPVPLKKDKNSKTTHHH.

This sequence belongs to the UPF0161 family.

It is found in the cell membrane. In terms of biological role, could be involved in insertion of integral membrane proteins into the membrane. The chain is Putative membrane protein insertion efficiency factor from Staphylococcus epidermidis (strain ATCC 35984 / DSM 28319 / BCRC 17069 / CCUG 31568 / BM 3577 / RP62A).